The primary structure comprises 110 residues: uncharacterized protein (110 aa).

Transmembrane regions (helical) follow at residues L4–N26, A46–L68, and L72–T91.

The protein localises to the cell membrane. This is an uncharacterized protein from Bacillus subtilis (strain 168).